We begin with the raw amino-acid sequence, 465 residues long: UDP-N-acetylmuramoylalanine--D-glutamate ligase (465 aa).

112 to 118 (GTDGKTT) is an ATP binding site.

This sequence belongs to the MurCDEF family.

Its subcellular location is the cytoplasm. It carries out the reaction UDP-N-acetyl-alpha-D-muramoyl-L-alanine + D-glutamate + ATP = UDP-N-acetyl-alpha-D-muramoyl-L-alanyl-D-glutamate + ADP + phosphate + H(+). It functions in the pathway cell wall biogenesis; peptidoglycan biosynthesis. Cell wall formation. Catalyzes the addition of glutamate to the nucleotide precursor UDP-N-acetylmuramoyl-L-alanine (UMA). This is UDP-N-acetylmuramoylalanine--D-glutamate ligase from Chlorobium limicola (strain DSM 245 / NBRC 103803 / 6330).